Consider the following 183-residue polypeptide: Large ribosomal subunit protein uL5 (183 aa).

This sequence belongs to the universal ribosomal protein uL5 family. In terms of assembly, part of the 50S ribosomal subunit; part of the 5S rRNA/L5/L18/L25 subcomplex. Contacts the 5S rRNA and the P site tRNA. Forms a bridge to the 30S subunit in the 70S ribosome.

Its function is as follows. This is one of the proteins that bind and probably mediate the attachment of the 5S RNA into the large ribosomal subunit, where it forms part of the central protuberance. In the 70S ribosome it contacts protein S13 of the 30S subunit (bridge B1b), connecting the 2 subunits; this bridge is implicated in subunit movement. Contacts the P site tRNA; the 5S rRNA and some of its associated proteins might help stabilize positioning of ribosome-bound tRNAs. The sequence is that of Large ribosomal subunit protein uL5 from Leptospira biflexa serovar Patoc (strain Patoc 1 / Ames).